A 336-amino-acid chain; its full sequence is GTP 3',8-cyclase (336 aa).

Residues 16–241 enclose the Radical SAM core domain; it reads AYRRTYYYLR…QSKGITDGPA (226 aa). GTP is bound at residue Arg-25. [4Fe-4S] cluster contacts are provided by Cys-32 and Cys-36. Tyr-38 provides a ligand contact to S-adenosyl-L-methionine. Cys-39 provides a ligand contact to [4Fe-4S] cluster. Arg-75 serves as a coordination point for GTP. Gly-79 provides a ligand contact to S-adenosyl-L-methionine. Thr-106 serves as a coordination point for GTP. Residue Ser-130 coordinates S-adenosyl-L-methionine. Lys-167 contacts GTP. An S-adenosyl-L-methionine-binding site is contributed by Met-201. 2 residues coordinate [4Fe-4S] cluster: Cys-264 and Cys-267. 269-271 lines the GTP pocket; it reads RLR. Cys-281 is a [4Fe-4S] cluster binding site.

Belongs to the radical SAM superfamily. MoaA family. As to quaternary structure, monomer and homodimer. The cofactor is [4Fe-4S] cluster.

It catalyses the reaction GTP + AH2 + S-adenosyl-L-methionine = (8S)-3',8-cyclo-7,8-dihydroguanosine 5'-triphosphate + 5'-deoxyadenosine + L-methionine + A + H(+). It participates in cofactor biosynthesis; molybdopterin biosynthesis. Catalyzes the cyclization of GTP to (8S)-3',8-cyclo-7,8-dihydroguanosine 5'-triphosphate. In Actinobacillus succinogenes (strain ATCC 55618 / DSM 22257 / CCUG 43843 / 130Z), this protein is GTP 3',8-cyclase.